Consider the following 334-residue polypeptide: N-chimaerin (334 aa).

A compositionally biased stretch (polar residues) spans 1–10 (MPSKESWSGR). Positions 1–22 (MPSKESWSGRKTNRATVHKSKQ) are disordered. Threonine 67 carries the post-translational modification Phosphothreonine. Residues 80 to 130 (VHNFKVHTFRGPHWCEYCANFMWGLIAQGVKCADCGLNVHKQCSKMVPNDC) form a Phorbol-ester/DAG-type zinc finger. In terms of domain architecture, Rho-GAP spans 143–334 (CDLTTLVKAH…LLIKNEDILF (192 aa)). Threonine 215 carries the phosphothreonine modification.

In terms of assembly, interacts with EPHA4; effector of EPHA4 in axon guidance linking EPHA4 activation to RAC1 regulation. Phosphorylated. Phosphorylation is EPHA4 kinase activity-dependent. In terms of tissue distribution, in neurons in brain regions that are involved in learning and memory processes.

GTPase-activating protein for p21-rac and a phorbol ester receptor. Involved in the assembly of neuronal locomotor circuits as a direct effector of EPHA4 in axon guidance. The sequence is that of N-chimaerin (Chn1) from Rattus norvegicus (Rat).